The chain runs to 423 residues: MKAQPPLRLTAQAMAFVLAGGRGSRLKELTDRRAKPAVYFGGKARIIDFALSNAMNSGIRKMAIATQYKAHSLIRHIQRGWNFFREERNEYLDILPASQRVDENRWYLGTADAVTQNIDIVDSYDIKYVIILAGDHVYKMDYEIMLRQHCETGADVTIGCLTVPRAEATAFGVMHVDANLRITDFLEKPADPPGIPGDEANALASMGIYVFDWAFLRDLLIRDAEDPNSSHDFGHDLIPAIVKNGKAMAHRFSDSCVMTGLETEPYWRDVGTIDAFWQANIDLTDFTPKLDLYDREWPIWTYSQIVPPAKFIHDSENRRGTAISSLVSGDCIVSGSEIRSSLLFTGCRTHSYSSMSHVVALPHVTVNRKADLTNCVLDRGVVVPEGLVIGQDAEEDARWFRRSEGGIVLVTQDMLDARARALN.

Alpha-D-glucose 1-phosphate is bound by residues tyrosine 107, glycine 172, 187–188, and serine 205; that span reads EK.

The protein belongs to the bacterial/plant glucose-1-phosphate adenylyltransferase family. In terms of assembly, homotetramer.

It catalyses the reaction alpha-D-glucose 1-phosphate + ATP + H(+) = ADP-alpha-D-glucose + diphosphate. It functions in the pathway glycan biosynthesis; glycogen biosynthesis. Its function is as follows. Involved in the biosynthesis of ADP-glucose, a building block required for the elongation reactions to produce glycogen. Catalyzes the reaction between ATP and alpha-D-glucose 1-phosphate (G1P) to produce pyrophosphate and ADP-Glc. The chain is Glucose-1-phosphate adenylyltransferase from Cereibacter sphaeroides (strain ATCC 17029 / ATH 2.4.9) (Rhodobacter sphaeroides).